Here is a 171-residue protein sequence, read N- to C-terminus: Homeobox protein engrailed-1-B (171 aa).

Disordered stretches follow at residues 1–41 (EDPG…NAAP) and 60–86 (YSDR…KRPR). A compositionally biased stretch (low complexity) spans 15 to 29 (PDSDTPSDSSKGSDS). A DNA-binding region (homeobox) is located at residues 82 to 141 (DKRPRTAFTAEQLQRLKAEFQANRYITEQRRQTLAQELSLNESQIKIWFQNKRAKIKKAS).

This sequence belongs to the engrailed homeobox family.

It localises to the nucleus. Required for proper formation of the apical ectodermal ridge and correct dorsal-ventral patterning in the limb. The protein is Homeobox protein engrailed-1-B (en1-b) of Xenopus laevis (African clawed frog).